The following is a 33-amino-acid chain: Alpha-amanitin proprotein (33 aa).

A propeptide spanning residues 1 to 10 (MSDINATRLP) is cleaved from the precursor. Isoleucine 11 carries the post-translational modification (3R,4R)-4,5-dihydroxyisoleucine; in form alpha-amanitin. Isoleucine 11 is modified ((3R,4S)-4-hydroxyisoleucine; in form gamma-amanitin). Positions 11–18 (IWGIGCNP) form a cross-link, cyclopeptide (Ile-Pro). The 2'-cysteinyl-6'-hydroxytryptophan sulfoxide (Trp-Cys) cross-link spans 12 to 16 (WGIGC). The residue at position 18 (proline 18) is a 4-hydroxyproline. Positions 19–33 (CVGDEVTALITRGEA) are excised as a propeptide.

This sequence belongs to the MSDIN fungal toxin family. In terms of processing, processed by the macrocyclase-peptidase enzyme POPB to yield a toxic cyclic decapeptide. POPB first removes 10 residues from the N-terminus. Conformational trapping of the remaining peptide forces the enzyme to release this intermediate rather than proceed to macrocyclization. The enzyme rebinds the remaining peptide in a different conformation and catalyzes macrocyclization of the N-terminal 8 residues.

Its function is as follows. Major toxin belonging to the bicyclic octapeptides amatoxins that acts by binding non-competitively to RNA polymerase II and greatly slowing the elongation of transcripts from target promoters. In Amanita pallidorosea, this protein is Alpha-amanitin proprotein.